The chain runs to 139 residues: Large ribosomal subunit protein uL16 (139 aa).

The span at 1-17 (MLIPRRTKHRKQHHPRR) shows a compositional bias: basic residues. The interval 1 to 24 (MLIPRRTKHRKQHHPRRTGAASGG) is disordered.

This sequence belongs to the universal ribosomal protein uL16 family. Part of the 50S ribosomal subunit.

Functionally, binds 23S rRNA and is also seen to make contacts with the A and possibly P site tRNAs. This Beutenbergia cavernae (strain ATCC BAA-8 / DSM 12333 / CCUG 43141 / JCM 11478 / NBRC 16432 / NCIMB 13614 / HKI 0122) protein is Large ribosomal subunit protein uL16.